The sequence spans 61 residues: Large ribosomal subunit protein uL30 (61 aa).

This sequence belongs to the universal ribosomal protein uL30 family. Part of the 50S ribosomal subunit.

The protein is Large ribosomal subunit protein uL30 of Corynebacterium diphtheriae (strain ATCC 700971 / NCTC 13129 / Biotype gravis).